Here is a 488-residue protein sequence, read N- to C-terminus: Aspartyl/glutamyl-tRNA(Asn/Gln) amidotransferase subunit B (488 aa).

This sequence belongs to the GatB/GatE family. GatB subfamily. Heterotrimer of A, B and C subunits.

It catalyses the reaction L-glutamyl-tRNA(Gln) + L-glutamine + ATP + H2O = L-glutaminyl-tRNA(Gln) + L-glutamate + ADP + phosphate + H(+). The enzyme catalyses L-aspartyl-tRNA(Asn) + L-glutamine + ATP + H2O = L-asparaginyl-tRNA(Asn) + L-glutamate + ADP + phosphate + 2 H(+). Functionally, allows the formation of correctly charged Asn-tRNA(Asn) or Gln-tRNA(Gln) through the transamidation of misacylated Asp-tRNA(Asn) or Glu-tRNA(Gln) in organisms which lack either or both of asparaginyl-tRNA or glutaminyl-tRNA synthetases. The reaction takes place in the presence of glutamine and ATP through an activated phospho-Asp-tRNA(Asn) or phospho-Glu-tRNA(Gln). The protein is Aspartyl/glutamyl-tRNA(Asn/Gln) amidotransferase subunit B of Chlamydia trachomatis serovar L2 (strain ATCC VR-902B / DSM 19102 / 434/Bu).